The primary structure comprises 502 residues: MAIKAEEISALLRSQIENYESEMSVTDVGTVLQIGDGIALIHGLNDVMAGELVEFHNGVLGLAQNLEESNVGVVILGPYTGITEGDEVKRTGRIMEVPVGEELIGRVVNPLGQPIDGQGPINTTKTRPVEKKATGVMDRKSVDEPLQTGIKAIDALVPIGRGQRELIIGDRQTGKTTIAIDTILNQKDQGTICIYVAIGQKDSTVRANVEKLRQAGALDYTIVVAASASEPSPLLYIAPYSGVTMGEEFMFNGKHVLIVYDDLTKQAAAYRELSLLLRRPPGREAYPGDVFYLHSRLLERAAKLNDDLGGGSITALPIIETQAGDISAYVPTNVISITDGQIFLQSDLFFSGVRPAINAGQSVSRVGGSAQIKAMKKVAGTLRLDLASYRELESFAQFGSDLDEFTASKLERGKRTVEVLKQDQNKPLPVEHQVLIIYALTKGYLDDIPVVDITRFEDELNHWAESNATELLNEIRETGGLPDAEKFDTAINEFKKSFSKSE.

169–176 (GDRQTGKT) contacts ATP.

The protein belongs to the ATPase alpha/beta chains family. As to quaternary structure, F-type ATPases have 2 components, CF(1) - the catalytic core - and CF(0) - the membrane proton channel. CF(1) has five subunits: alpha(3), beta(3), gamma(1), delta(1), epsilon(1). CF(0) has three main subunits: a(1), b(2) and c(9-12). The alpha and beta chains form an alternating ring which encloses part of the gamma chain. CF(1) is attached to CF(0) by a central stalk formed by the gamma and epsilon chains, while a peripheral stalk is formed by the delta and b chains.

The protein localises to the cell membrane. It catalyses the reaction ATP + H2O + 4 H(+)(in) = ADP + phosphate + 5 H(+)(out). Produces ATP from ADP in the presence of a proton gradient across the membrane. The alpha chain is a regulatory subunit. This chain is ATP synthase subunit alpha, found in Staphylococcus aureus (strain Mu3 / ATCC 700698).